Consider the following 299-residue polypeptide: Protoheme IX farnesyltransferase (299 aa).

8 helical membrane passes run 25 to 45, 51 to 71, 97 to 117, 119 to 139, 147 to 167, 173 to 193, 225 to 245, and 275 to 295; these read IVSL…PDLA, LFGT…NHLI, ALAF…FLVN, LTAW…TAFL, IVLG…AVTG, AFLL…ALAL, FLLF…LLYL, and FGYS…DHYL.

Belongs to the UbiA prenyltransferase family. Protoheme IX farnesyltransferase subfamily.

Its subcellular location is the cell inner membrane. The enzyme catalyses heme b + (2E,6E)-farnesyl diphosphate + H2O = Fe(II)-heme o + diphosphate. It functions in the pathway porphyrin-containing compound metabolism; heme O biosynthesis; heme O from protoheme: step 1/1. Its function is as follows. Converts heme B (protoheme IX) to heme O by substitution of the vinyl group on carbon 2 of heme B porphyrin ring with a hydroxyethyl farnesyl side group. The protein is Protoheme IX farnesyltransferase of Nitrosococcus oceani (strain ATCC 19707 / BCRC 17464 / JCM 30415 / NCIMB 11848 / C-107).